A 352-amino-acid chain; its full sequence is C-X-C chemokine receptor type 4 (352 aa).

Positions 1–21 are important for chemokine binding and signaling; the sequence is MEGISIYTSDNYTEEMGSGDY. Over 1–38 the chain is Extracellular; that stretch reads MEGISIYTSDNYTEEMGSGDYDSIKEPCFREENAHFNR. Y7 bears the Sulfotyrosine mark. An N-linked (GlcNAc...) asparagine glycan is attached at N11. Y12 carries the post-translational modification Sulfotyrosine. S18 carries an O-linked (Xyl...) (chondroitin sulfate) serine glycan. Y21 carries the post-translational modification Sulfotyrosine. 2 disulfides stabilise this stretch: C28/C274 and C109/C186. Residues 39–63 form a helical membrane-spanning segment; sequence IFLPTIYSIIFLTGIVGNGLVILVM. Topologically, residues 64 to 77 are cytoplasmic; it reads GYQKKLRSMTDKYR. A helical membrane pass occupies residues 78-99; that stretch reads LHLSVADLLFVITLPFWAVDAV. Residues 94-97 are chemokine binding; sequence WAVD. At 100–110 the chain is on the extracellular side; it reads ANWYFGNFLCK. The helical transmembrane segment at 111–130 threads the bilayer; sequence AVHVIYTVNLYSSVLILAFI. Residues 113–117 form a chemokine binding region; that stretch reads HVIYT. Over 131 to 154 the chain is Cytoplasmic; it reads SLDRYLAIVHATNSQRPRKLLAEK. The Important for signaling signature appears at 133–135; that stretch reads DRY. The interval 135-147 is involved in dimerization; when bound to chemokine; sequence YLAIVHATNSQRP. A helical membrane pass occupies residues 155–174; that stretch reads VVYVGVWIPALLLTIPDFIF. Topologically, residues 175-195 are extracellular; the sequence is ASVSEADDRYICDRFYPNDLW. Positions 186–190 are chemokine binding, important for signaling; that stretch reads CDRFY. An involved in dimerization region spans residues 191–210; it reads PNDLWVVVFQFQHIMVGLIL. A helical membrane pass occupies residues 196–216; the sequence is VVVFQFQHIMVGLILPGIVIL. The Cytoplasmic portion of the chain corresponds to 217–241; the sequence is SCYCIIISKLSHSKGHQKRKALKTT. A helical membrane pass occupies residues 242–261; it reads VILILAFFACWLPYYIGISI. Residues 262–282 are Extracellular-facing; sequence DSFILLEIIKQGCEFENTVHK. An involved in dimerization region spans residues 266–268; that stretch reads LLE. Residues 283–302 form a helical membrane-spanning segment; it reads WISITEALAFFHCCLNPILY. The Cytoplasmic portion of the chain corresponds to 303–352; sequence AFLGAKFKTSAQHALTSVSRGSSLKILSKGKRGGHSSVSTESESSSFHSS. A phosphoserine mark is found at S319 and S321. 2 positions are modified to phosphoserine; by PKC and GRK6: S324 and S325. A disordered region spans residues 329-352; it reads LSKGKRGGHSSVSTESESSSFHSS. S330 bears the Phosphoserine; by GRK6 mark. A Glycyl lysine isopeptide (Lys-Gly) (interchain with G-Cter in ubiquitin) cross-link involves residue K331. Over residues 337–352 the composition is skewed to low complexity; the sequence is HSSVSTESESSSFHSS. S339 is subject to Phosphoserine; by GRK6. Phosphoserine occurs at positions 348 and 351.

It belongs to the G-protein coupled receptor 1 family. In terms of assembly, monomer. Can form homodimers. Interacts with CD164. Interacts with ARRB2; the interaction is dependent on the C-terminal phosphorylation of CXCR4 and allows activation of MAPK1 and MAPK3. Interacts with ARR3; the interaction is dependent on the C-terminal phosphorylation of CXCR4 and modulates calcium mobilization. Interacts with RNF113A; the interaction, enhanced by CXCL12, promotes CXCR4 ubiquitination and subsequent degradation. Interacts (via the cytoplasmic C-terminal) with ITCH (via the WW domains I and II); the interaction, enhanced by CXCL12, promotes CXCR4 ubiquitination and leads to its degradation. Interacts with extracellular ubiquitin. Interacts with DBN1; this interaction is enhanced by antigenic stimulation. Following LPS binding, may form a complex with GDF5, HSP90AA1 and HSPA8. In terms of processing, phosphorylated on agonist stimulation. Rapidly phosphorylated on serine and threonine residues in the C-terminal. Phosphorylation at Ser-324 and Ser-325 leads to recruitment of ITCH, ubiquitination and protein degradation. Ubiquitinated after ligand binding, leading to its degradation. Ubiquitinated by ITCH at the cell membrane on agonist stimulation. The ubiquitin-dependent mechanism, endosomal sorting complex required for transport (ESCRT), then targets CXCR4 for lysosomal degradation. This process is dependent also on prior Ser-/Thr-phosphorylation in the C-terminal of CXCR4. Also binding of ARRB1 to STAM negatively regulates CXCR4 sorting to lysosomes though modulating ubiquitination of SFR5S. Post-translationally, sulfation is required for efficient binding of CXCL12/SDF-1alpha and promotes its dimerization. In terms of processing, O- and N-glycosylated. N-glycosylation can mask coreceptor function. The O-glycosylation chondroitin sulfate attachment does not affect interaction with CXCL12/SDF-1alpha nor its coreceptor activity.

Its subcellular location is the cell membrane. It is found in the cell junction. It localises to the early endosome. The protein localises to the late endosome. The protein resides in the lysosome. Receptor for the C-X-C chemokine CXCL12/SDF-1 that transduces a signal by increasing intracellular calcium ion levels and enhancing MAPK1/MAPK3 activation. Involved in the AKT signaling cascade. Plays a role in regulation of cell migration, e.g. during wound healing. Acts as a receptor for extracellular ubiquitin; leading to enhanced intracellular calcium ions and reduced cellular cAMP levels. Binds bacterial lipopolysaccharide (LPS) et mediates LPS-induced inflammatory response, including TNF secretion by monocytes. Involved in hematopoiesis and in cardiac ventricular septum formation. Also plays an essential role in vascularization of the gastrointestinal tract, probably by regulating vascular branching and/or remodeling processes in endothelial cells. Involved in cerebellar development. In the CNS, could mediate hippocampal-neuron survival. This Papio anubis (Olive baboon) protein is C-X-C chemokine receptor type 4 (CXCR4).